Reading from the N-terminus, the 152-residue chain is UPF0225 protein YchJ (152 aa).

This sequence belongs to the UPF0225 family.

The polypeptide is UPF0225 protein YchJ (Escherichia coli O139:H28 (strain E24377A / ETEC)).